The primary structure comprises 100 residues: Putative pterin-4-alpha-carbinolamine dehydratase (100 aa).

Belongs to the pterin-4-alpha-carbinolamine dehydratase family.

The catalysed reaction is (4aS,6R)-4a-hydroxy-L-erythro-5,6,7,8-tetrahydrobiopterin = (6R)-L-erythro-6,7-dihydrobiopterin + H2O. The sequence is that of Putative pterin-4-alpha-carbinolamine dehydratase from Allorhizobium ampelinum (strain ATCC BAA-846 / DSM 112012 / S4) (Agrobacterium vitis (strain S4)).